Reading from the N-terminus, the 361-residue chain is Ribosomal RNA large subunit methyltransferase M (361 aa).

S-adenosyl-L-methionine-binding positions include Ser-187, 220–223 (CPGG), Asp-239, Asp-259, and Asp-276. Lys-305 functions as the Proton acceptor in the catalytic mechanism.

Belongs to the class I-like SAM-binding methyltransferase superfamily. RNA methyltransferase RlmE family. RlmM subfamily. As to quaternary structure, monomer.

Its subcellular location is the cytoplasm. It catalyses the reaction cytidine(2498) in 23S rRNA + S-adenosyl-L-methionine = 2'-O-methylcytidine(2498) in 23S rRNA + S-adenosyl-L-homocysteine + H(+). In terms of biological role, catalyzes the 2'-O-methylation at nucleotide C2498 in 23S rRNA. The sequence is that of Ribosomal RNA large subunit methyltransferase M from Shewanella oneidensis (strain ATCC 700550 / JCM 31522 / CIP 106686 / LMG 19005 / NCIMB 14063 / MR-1).